Reading from the N-terminus, the 91-residue chain is Mercuric transport protein periplasmic component (91 aa).

The signal sequence occupies residues Met-1 to Ala-19. An HMA domain is found at Gln-22–Ser-88. Residues Cys-33 and Cys-36 each coordinate Hg(2+).

This sequence belongs to the MerP family. In terms of assembly, monomer.

The protein localises to the periplasm. Involved in mercury resistance. Acts as a mercury scavenger that specifically binds to a mercuric ion in the periplasm and probably passes it to the cytoplasmic mercuric reductase MerA via the mercuric transport protein MerT. This is Mercuric transport protein periplasmic component from Shigella flexneri.